Here is a 189-residue protein sequence, read N- to C-terminus: Large ribosomal subunit protein uL5 (189 aa).

The protein belongs to the universal ribosomal protein uL5 family. As to quaternary structure, part of the 50S ribosomal subunit; part of the 5S rRNA/L5/L18/L25 subcomplex. Contacts the 5S rRNA and the P site tRNA. Forms a bridge to the 30S subunit in the 70S ribosome.

In terms of biological role, this is one of the proteins that bind and probably mediate the attachment of the 5S RNA into the large ribosomal subunit, where it forms part of the central protuberance. In the 70S ribosome it contacts protein S13 of the 30S subunit (bridge B1b), connecting the 2 subunits; this bridge is implicated in subunit movement. Contacts the P site tRNA; the 5S rRNA and some of its associated proteins might help stabilize positioning of ribosome-bound tRNAs. This chain is Large ribosomal subunit protein uL5, found in Corynebacterium jeikeium (strain K411).